Consider the following 324-residue polypeptide: Beta-ketoacyl-[acyl-carrier-protein] synthase III (324 aa).

Active-site residues include C112 and H249. The segment at 250–254 (QANRR) is ACP-binding. N279 is a catalytic residue.

This sequence belongs to the thiolase-like superfamily. FabH family. In terms of assembly, homodimer.

Its subcellular location is the cytoplasm. It carries out the reaction malonyl-[ACP] + acetyl-CoA + H(+) = 3-oxobutanoyl-[ACP] + CO2 + CoA. The protein operates within lipid metabolism; fatty acid biosynthesis. Functionally, catalyzes the condensation reaction of fatty acid synthesis by the addition to an acyl acceptor of two carbons from malonyl-ACP. Catalyzes the first condensation reaction which initiates fatty acid synthesis and may therefore play a role in governing the total rate of fatty acid production. Possesses both acetoacetyl-ACP synthase and acetyl transacylase activities. Its substrate specificity determines the biosynthesis of branched-chain and/or straight-chain of fatty acids. The chain is Beta-ketoacyl-[acyl-carrier-protein] synthase III from Streptococcus equi subsp. equi (strain 4047).